The sequence spans 199 residues: Neurotrophic factor BDNF precursor form (199 aa).

The interval 1 to 23 (GQGSLAYPGLRTQGNLETLSGPN) is disordered. Residues 1–100 (GQGSLAYPGL…AANMSMRVRR (100 aa)) constitute a propeptide that is removed on maturation. Residues 12 to 23 (TQGNLETLSGPN) are compositionally biased toward polar residues. N93 carries N-linked (GlcNAc...) asparagine glycosylation. C113 and C180 are joined by a disulfide.

The protein belongs to the NGF-beta family.

The protein localises to the secreted. Functionally, promotes the survival of neuronal populations that are all located either in the central nervous system or directly connected to it. The polypeptide is Neurotrophic factor BDNF precursor form (BDNF) (Eunectes notaeus (Yellow anaconda)).